The sequence spans 396 residues: Phosphoglycerate kinase (396 aa).

Residues 21–23 (DFN), Arg-36, 59–62 (HLGK), Arg-119, and Arg-156 each bind substrate. Residues Lys-206, Gly-294, Glu-325, and 352 to 355 (GGDS) contribute to the ATP site.

This sequence belongs to the phosphoglycerate kinase family. In terms of assembly, monomer.

It is found in the cytoplasm. It carries out the reaction (2R)-3-phosphoglycerate + ATP = (2R)-3-phospho-glyceroyl phosphate + ADP. It functions in the pathway carbohydrate degradation; glycolysis; pyruvate from D-glyceraldehyde 3-phosphate: step 2/5. The sequence is that of Phosphoglycerate kinase from Listeria innocua serovar 6a (strain ATCC BAA-680 / CLIP 11262).